Consider the following 1533-residue polypeptide: Protein TALPID3 (1533 aa).

The segment at 32–57 (LSANKRLPVGTGTSLNGTSRGSSDLT) is disordered. Positions 42 to 57 (TGTSLNGTSRGSSDLT) are enriched in polar residues. Residues 182 to 223 (QSDLEAKVNSVTELLSKLQETDKHLQRVTEQQTSIQRKQEKL) are a coiled coil. A compositionally biased stretch (basic and acidic residues) spans 309 to 321 (KEVEDTSFDKQKS). Disordered regions lie at residues 309 to 339 (KEVEDTSFDKQKSPLETPAPRRFAPVPVSRD) and 377 to 400 (LTRKSESSNTTSLTRSKIGWTPEK). Position 406 is a phosphoserine (Ser406). Residues 467 to 501 (SVLKDAEKILRGVQNNKKVLEENLEAIIRAKDGAA) adopt a coiled-coil conformation. A required for centrosomal localization region spans residues 467–554 (SVLKDAEKIL…YEQKRFDQKN (88 aa)). Residues 546–575 (EQKRFDQKNQRTKKGQNMTKDIRTNTQDKT) form a disordered region. Positions 560-575 (GQNMTKDIRTNTQDKT) are enriched in polar residues. Residues Thr1042 and Thr1046 each carry the phosphothreonine modification. The residue at position 1050 (Ser1050) is a Phosphoserine. Thr1063 bears the Phosphothreonine mark. Ser1066 bears the Phosphoserine mark. The interval 1129–1156 (SSPELPKPWGDGDLPLEEENPNSPQEEL) is disordered.

It belongs to the TALPID3 family. As to quaternary structure, interacts with CCP110, CEP290, CEP97, KIF24. In terms of tissue distribution, ubiquitously expressed. Expressed in photoreceptor cells (at protein level).

It is found in the cytoplasm. The protein localises to the cytoskeleton. Its subcellular location is the microtubule organizing center. The protein resides in the centrosome. It localises to the photoreceptor inner segment. It is found in the centriole. The protein localises to the cilium basal body. In terms of biological role, required for ciliogenesis and sonic hedgehog/SHH signaling. Required for the centrosomal recruitment of RAB8A and for the targeting of centriole satellite proteins to centrosomes such as of PCM1. May play a role in early ciliogenesis in the disappearance of centriolar satellites that preceeds ciliary vesicle formation. Involved in regulation of cell intracellular organization. Involved in regulation of cell polarity. Required for asymmetrical localization of CEP120 to daughter centrioles. The protein is Protein TALPID3 (KIAA0586) of Homo sapiens (Human).